Reading from the N-terminus, the 229-residue chain is Homeobox-leucine zipper protein HOX3 (229 aa).

Positions 1 to 82 (MMGATSPSGL…GPHRPKKLRL (82 aa)) are disordered. Residues 52 to 68 (GEEEEFPMGSVEEDEEE) are compositionally biased toward acidic residues. Positions 75–134 (HRPKKLRLSKEQSRLLEESFRLNHTLTPKQKEALAIKLKLRPRQVEVWFQNRRARTKLKQ) form a DNA-binding region, homeobox. The leucine-zipper stretch occupies residues 133-177 (KQTEMECEYLKRCFGSLTEENRRLQREVEELRAMRVAPPTVLSPH). Residues 198-229 (AATGPPAVRPPPSSAAAAAPSPFHPRRPSAAF) form a disordered region.

Belongs to the HD-ZIP homeobox family. Class II subfamily. Homodimer. May form a heterodimer with HOX1, HOX2 or HOX7. In terms of tissue distribution, expressed in seedlings, roots, leaves, nodes, internodes, flowers and embryo.

Its subcellular location is the nucleus. Probable transcription repressor that binds to the DNA sequence 5'-CAAT[GC]ATTG-3'. In Oryza sativa subsp. indica (Rice), this protein is Homeobox-leucine zipper protein HOX3 (HOX3).